The following is a 922-amino-acid chain: Lacticin 481/lactococcin biosynthesis protein LcnDR2 (922 aa).

Its function is as follows. Could be implicated in the processing or the export process of the lantibiotic lacticin 481/lactococcin DR. This is Lacticin 481/lactococcin biosynthesis protein LcnDR2 (lcnDR2) from Lactococcus lactis subsp. lactis (Streptococcus lactis).